Consider the following 111-residue polypeptide: Cytochrome c (111 aa).

Residue Ala1 is modified to N-acetylalanine. Residues Cys22, Cys25, and His26 each contribute to the heme c site. Lys80 carries the N6,N6,N6-trimethyllysine modification. Position 88 (Met88) interacts with heme c. Position 94 is an N6,N6,N6-trimethyllysine (Lys94).

It belongs to the cytochrome c family. Binds 1 heme c group covalently per subunit.

The protein resides in the mitochondrion intermembrane space. Functionally, electron carrier protein. The oxidized form of the cytochrome c heme group can accept an electron from the heme group of the cytochrome c1 subunit of cytochrome reductase. Cytochrome c then transfers this electron to the cytochrome oxidase complex, the final protein carrier in the mitochondrial electron-transport chain. The chain is Cytochrome c from Gossypium barbadense (Sea Island cotton).